We begin with the raw amino-acid sequence, 469 residues long: DNA-binding transcriptional regulator NtrC (469 aa).

In terms of domain architecture, Response regulatory spans 5 to 119; it reads IVWVVDDDSS…EAVALVERAI (115 aa). D54 is modified (4-aspartylphosphate). Residues 140–369 form the Sigma-54 factor interaction domain; the sequence is IIGEAPAMQD…LENTCRWLTV (230 aa). Residues 168 to 175 and 231 to 240 each bind ATP; these read GESGTGKE and ADGGTLFLDE. The segment at residues 445 to 464 is a DNA-binding region (H-T-H motif); the sequence is KQEAARLLGWGRNTLTRKLK.

In terms of processing, phosphorylated and dephosphorylated by NtrB.

It localises to the cytoplasm. Functionally, member of the two-component regulatory system NtrB/NtrC, which controls expression of the nitrogen-regulated (ntr) genes in response to nitrogen limitation. Phosphorylated NtrC binds directly to DNA and stimulates the formation of open promoter-sigma54-RNA polymerase complexes. The sequence is that of DNA-binding transcriptional regulator NtrC (glnG) from Escherichia coli O157:H7.